A 631-amino-acid chain; its full sequence is Probable protein phosphatase 2C 31 (631 aa).

Disordered stretches follow at residues 119 to 142 and 205 to 231; these read GPLHATSGRFSEASGSASTASDRF and LSGRRSNGPAEPTTKSDGDYRSTPKGN. Residues 131 to 140 show a composition bias toward polar residues; that stretch reads ASGSASTASD. Positions 221–622 constitute a PPM-type phosphatase domain; it reads DGDYRSTPKG…DDVSIIVMSF (402 aa). 2 residues coordinate Mn(2+): D261 and G262. The disordered stretch occupies residues 324–347; sequence GGDDDPDAERKAKRGRIERNADDD. Mn(2+) contacts are provided by D550 and D613.

The protein belongs to the PP2C family. It depends on Mg(2+) as a cofactor. The cofactor is Mn(2+).

The enzyme catalyses O-phospho-L-seryl-[protein] + H2O = L-seryl-[protein] + phosphate. It carries out the reaction O-phospho-L-threonyl-[protein] + H2O = L-threonyl-[protein] + phosphate. In Oryza sativa subsp. japonica (Rice), this protein is Probable protein phosphatase 2C 31.